The following is a 765-amino-acid chain: Transcription factor RFX3 (765 aa).

Residues 189-264 (HLQWLLDNYE…YHYYGIRVKP (76 aa)) constitute a DNA-binding region (RFX-type winged-helix).

Belongs to the RFX family.

Its subcellular location is the nucleus. In terms of biological role, transcription factor required for ciliogenesis and islet cell differentiation during endocrine pancreas development. The sequence is that of Transcription factor RFX3 (rfx3) from Danio rerio (Zebrafish).